Consider the following 63-residue polypeptide: Large ribosomal subunit protein bL32 (63 aa).

Residues 1–45 (MAVQQNKKSRSRRDMRRSHDALTKPTLSVDPTTGETHLRHHMTPD) are disordered. The segment covering 7 to 16 (KKSRSRRDMR) has biased composition (basic residues). Over residues 25–35 (PTLSVDPTTGE) the composition is skewed to polar residues.

It belongs to the bacterial ribosomal protein bL32 family.

In Legionella pneumophila (strain Paris), this protein is Large ribosomal subunit protein bL32.